The following is a 234-amino-acid chain: GTP cyclohydrolase 1 (234 aa).

Positions 1 to 26 (MDALIKPLRAGKPDAKPADPKGTEFR) are disordered. Residues 11–26 (GKPDAKPADPKGTEFR) show a composition bias toward basic and acidic residues. Zn(2+)-binding residues include cysteine 123, histidine 126, and cysteine 194.

This sequence belongs to the GTP cyclohydrolase I family. As to quaternary structure, toroid-shaped homodecamer, composed of two pentamers of five dimers.

The enzyme catalyses GTP + H2O = 7,8-dihydroneopterin 3'-triphosphate + formate + H(+). Its pathway is cofactor biosynthesis; 7,8-dihydroneopterin triphosphate biosynthesis; 7,8-dihydroneopterin triphosphate from GTP: step 1/1. The sequence is that of GTP cyclohydrolase 1 from Rhodopseudomonas palustris (strain BisB18).